The primary structure comprises 409 residues: LL-diaminopimelate aminotransferase (409 aa).

2 residues coordinate substrate: Tyr15 and Gly42. Pyridoxal 5'-phosphate-binding positions include Tyr72, 108–109 (AK), Tyr132, Asn186, Tyr217, and 245–247 (SFS). Positions 109, 132, and 186 each coordinate substrate. Lys248 is modified (N6-(pyridoxal phosphate)lysine). Pyridoxal 5'-phosphate is bound by residues Arg256 and Asn291. Residues Asn291 and Arg387 each contribute to the substrate site.

The protein belongs to the class-I pyridoxal-phosphate-dependent aminotransferase family. LL-diaminopimelate aminotransferase subfamily. As to quaternary structure, homodimer. Pyridoxal 5'-phosphate serves as cofactor.

The enzyme catalyses (2S,6S)-2,6-diaminopimelate + 2-oxoglutarate = (S)-2,3,4,5-tetrahydrodipicolinate + L-glutamate + H2O + H(+). The protein operates within amino-acid biosynthesis; L-lysine biosynthesis via DAP pathway; LL-2,6-diaminopimelate from (S)-tetrahydrodipicolinate (aminotransferase route): step 1/1. Its function is as follows. Involved in the synthesis of meso-diaminopimelate (m-DAP or DL-DAP), required for both lysine and peptidoglycan biosynthesis. Catalyzes the direct conversion of tetrahydrodipicolinate to LL-diaminopimelate. This is LL-diaminopimelate aminotransferase from Phocaeicola vulgatus (strain ATCC 8482 / DSM 1447 / JCM 5826 / CCUG 4940 / NBRC 14291 / NCTC 11154) (Bacteroides vulgatus).